A 382-amino-acid chain; its full sequence is 1-deoxy-D-xylulose 5-phosphate reductoisomerase (382 aa).

The NADPH site is built by threonine 10, glycine 11, serine 12, isoleucine 13, asparagine 38, and asparagine 120. Residue lysine 121 coordinates 1-deoxy-D-xylulose 5-phosphate. NADPH is bound at residue glutamate 122. Aspartate 146 lines the Mn(2+) pocket. 4 residues coordinate 1-deoxy-D-xylulose 5-phosphate: serine 147, glutamate 148, serine 172, and histidine 195. Glutamate 148 is a binding site for Mn(2+). An NADPH-binding site is contributed by glycine 201. 1-deoxy-D-xylulose 5-phosphate contacts are provided by serine 208, asparagine 213, lysine 214, and glutamate 217. Mn(2+) is bound at residue glutamate 217.

It belongs to the DXR family. Requires Mg(2+) as cofactor. It depends on Mn(2+) as a cofactor.

It catalyses the reaction 2-C-methyl-D-erythritol 4-phosphate + NADP(+) = 1-deoxy-D-xylulose 5-phosphate + NADPH + H(+). It participates in isoprenoid biosynthesis; isopentenyl diphosphate biosynthesis via DXP pathway; isopentenyl diphosphate from 1-deoxy-D-xylulose 5-phosphate: step 1/6. Catalyzes the NADPH-dependent rearrangement and reduction of 1-deoxy-D-xylulose-5-phosphate (DXP) to 2-C-methyl-D-erythritol 4-phosphate (MEP). This Thermoanaerobacter sp. (strain X514) protein is 1-deoxy-D-xylulose 5-phosphate reductoisomerase.